A 109-amino-acid polypeptide reads, in one-letter code: Resistin (109 aa).

A signal peptide spans 1–18; that stretch reads MKALSFLFIPVLGLLVCG. Intrachain disulfides connect Cys-51–Cys-104, Cys-63–Cys-103, Cys-72–Cys-89, Cys-74–Cys-91, and Cys-78–Cys-93.

This sequence belongs to the resistin/FIZZ family. As to quaternary structure, homodimer; disulfide-linked.

Its subcellular location is the secreted. In terms of biological role, hormone that seems to suppress insulin ability to stimulate glucose uptake into adipose cells. Potentially links obesity to diabetes. The chain is Resistin (RETN) from Bos taurus (Bovine).